We begin with the raw amino-acid sequence, 299 residues long: Ribosomal protein L11 methyltransferase (299 aa).

4 residues coordinate S-adenosyl-L-methionine: T139, G166, D188, and N231.

It belongs to the methyltransferase superfamily. PrmA family.

It is found in the cytoplasm. It carries out the reaction L-lysyl-[protein] + 3 S-adenosyl-L-methionine = N(6),N(6),N(6)-trimethyl-L-lysyl-[protein] + 3 S-adenosyl-L-homocysteine + 3 H(+). Methylates ribosomal protein L11. The protein is Ribosomal protein L11 methyltransferase of Thermosynechococcus vestitus (strain NIES-2133 / IAM M-273 / BP-1).